A 357-amino-acid chain; its full sequence is DNA primase small subunit PriS (357 aa).

Residues Asp-105, Asp-107, and Asp-259 contribute to the active site.

Belongs to the eukaryotic-type primase small subunit family. In terms of assembly, heterodimer of a small subunit (PriS) and a large subunit (PriL). Mg(2+) is required as a cofactor. Requires Mn(2+) as cofactor.

Catalytic subunit of DNA primase, an RNA polymerase that catalyzes the synthesis of short RNA molecules used as primers for DNA polymerase during DNA replication. The small subunit contains the primase catalytic core and has DNA synthesis activity on its own. Binding to the large subunit stabilizes and modulates the activity, increasing the rate of DNA synthesis while decreasing the length of the DNA fragments, and conferring RNA synthesis capability. The DNA polymerase activity may enable DNA primase to also catalyze primer extension after primer synthesis. May also play a role in DNA repair. This chain is DNA primase small subunit PriS, found in Methanococcus maripaludis (strain C6 / ATCC BAA-1332).